We begin with the raw amino-acid sequence, 322 residues long: Ferrochelatase (322 aa).

The Fe cation site is built by H193 and E274.

This sequence belongs to the ferrochelatase family.

The protein resides in the cytoplasm. It carries out the reaction heme b + 2 H(+) = protoporphyrin IX + Fe(2+). It functions in the pathway porphyrin-containing compound metabolism; protoheme biosynthesis; protoheme from protoporphyrin-IX: step 1/1. In terms of biological role, catalyzes the ferrous insertion into protoporphyrin IX. The sequence is that of Ferrochelatase from Photobacterium profundum (strain SS9).